We begin with the raw amino-acid sequence, 199 residues long: Thymidylate kinase (199 aa).

Gly7–Thr14 is an ATP binding site.

Belongs to the thymidylate kinase family.

The catalysed reaction is dTMP + ATP = dTDP + ADP. Phosphorylation of dTMP to form dTDP in both de novo and salvage pathways of dTTP synthesis. This chain is Thymidylate kinase, found in Tropheryma whipplei (strain Twist) (Whipple's bacillus).